The sequence spans 135 residues: C-type lectin PAL (135 aa).

4 disulfide bridges follow: Cys-3/Cys-14, Cys-31/Cys-131, Cys-38/Cys-133, and Cys-106/Cys-123. Positions 10–132 (MNGLCYKIFD…CGSKNAFLCQ (123 aa)) constitute a C-type lectin domain. Ca(2+) contacts are provided by Gln-96, Asp-98, Glu-104, Asn-119, and Asp-120. Positions 96–98 (QPD) match the Galactose-binding motif.

The protein belongs to the true venom lectin family. As to quaternary structure, homodimer; disulfide-linked. Expressed by the venom gland.

It localises to the secreted. In terms of biological role, galactose-binding lectin which recognizes specific carbohydrate structures and agglutinates a variety of animal cells by binding to cell-surface glycoproteins and glycolipids. This is a calcium-dependent lectin. Shows high hemagglutinating activity (MHC is 0.25 ug/ml on rabbit erythrocytes). The protein is C-type lectin PAL of Bitis arietans (African puff adder).